We begin with the raw amino-acid sequence, 122 residues long: U19-hexatoxin-Hi1a (122 aa).

The first 18 residues, 1–18, serve as a signal peptide directing secretion; the sequence is MNTMIGFIVLLVSATVLG. A propeptide spanning residues 19-80 is cleaved from the precursor; the sequence is DPELDALRKE…YENSNFREKR (62 aa). Cystine bridges form between Cys81–Cys96, Cys88–Cys101, and Cys95–Cys116.

As to expression, expressed by the venom gland.

It localises to the secreted. Probable ion channel inhibitor. This is U19-hexatoxin-Hi1a from Hadronyche infensa (Fraser island funnel-web spider).